Here is a 158-residue protein sequence, read N- to C-terminus: MNQIPMTLRGAEQLREELNYLKNVRRPEIIRNIAEAREYGDLKENAEYHAAREQQGFCEGRIQEIESKLSHAQIIDVTKLFPSGKVVFGVTVSVQNLNINEEQTYRIVGDDEANFKHNLISISSPIARGLIGKKKGDIVLIKTPRGEVKYQILKIEYL.

It belongs to the GreA/GreB family.

In terms of biological role, necessary for efficient RNA polymerase transcription elongation past template-encoded arresting sites. The arresting sites in DNA have the property of trapping a certain fraction of elongating RNA polymerases that pass through, resulting in locked ternary complexes. Cleavage of the nascent transcript by cleavage factors such as GreA or GreB allows the resumption of elongation from the new 3'terminus. GreA releases sequences of 2 to 3 nucleotides. This chain is Transcription elongation factor GreA, found in Baumannia cicadellinicola subsp. Homalodisca coagulata.